Here is a 338-residue protein sequence, read N- to C-terminus: Holliday junction branch migration complex subunit RuvB (338 aa).

A large ATPase domain (RuvB-L) region spans residues 1-181 (MTRTITPSIT…FGVISRLEFY (181 aa)). ATP contacts are provided by residues L20, R21, G62, K65, T66, T67, 128-130 (EDF), R171, Y181, and R218. Residue T66 coordinates Mg(2+). The tract at residues 182–252 (TDEELAFIIT…VVQDALALLE (71 aa)) is small ATPAse domain (RuvB-S). The interval 255–338 (EMGFDQMDRM…VPEPPQGKLF (84 aa)) is head domain (RuvB-H). DNA is bound by residues R310 and R315.

The protein belongs to the RuvB family. Homohexamer. Forms an RuvA(8)-RuvB(12)-Holliday junction (HJ) complex. HJ DNA is sandwiched between 2 RuvA tetramers; dsDNA enters through RuvA and exits via RuvB. An RuvB hexamer assembles on each DNA strand where it exits the tetramer. Each RuvB hexamer is contacted by two RuvA subunits (via domain III) on 2 adjacent RuvB subunits; this complex drives branch migration. In the full resolvosome a probable DNA-RuvA(4)-RuvB(12)-RuvC(2) complex forms which resolves the HJ.

It is found in the cytoplasm. It carries out the reaction ATP + H2O = ADP + phosphate + H(+). Functionally, the RuvA-RuvB-RuvC complex processes Holliday junction (HJ) DNA during genetic recombination and DNA repair, while the RuvA-RuvB complex plays an important role in the rescue of blocked DNA replication forks via replication fork reversal (RFR). RuvA specifically binds to HJ cruciform DNA, conferring on it an open structure. The RuvB hexamer acts as an ATP-dependent pump, pulling dsDNA into and through the RuvAB complex. RuvB forms 2 homohexamers on either side of HJ DNA bound by 1 or 2 RuvA tetramers; 4 subunits per hexamer contact DNA at a time. Coordinated motions by a converter formed by DNA-disengaged RuvB subunits stimulates ATP hydrolysis and nucleotide exchange. Immobilization of the converter enables RuvB to convert the ATP-contained energy into a lever motion, pulling 2 nucleotides of DNA out of the RuvA tetramer per ATP hydrolyzed, thus driving DNA branch migration. The RuvB motors rotate together with the DNA substrate, which together with the progressing nucleotide cycle form the mechanistic basis for DNA recombination by continuous HJ branch migration. Branch migration allows RuvC to scan DNA until it finds its consensus sequence, where it cleaves and resolves cruciform DNA. This chain is Holliday junction branch migration complex subunit RuvB, found in Geotalea uraniireducens (strain Rf4) (Geobacter uraniireducens).